The following is a 428-amino-acid chain: 3-phosphoshikimate 1-carboxyvinyltransferase (428 aa).

3 residues coordinate 3-phosphoshikimate: Lys22, Ser23, and Arg27. Residue Lys22 coordinates phosphoenolpyruvate. Gly96 and Arg124 together coordinate phosphoenolpyruvate. 3-phosphoshikimate contacts are provided by Ser169, Ser170, Gln171, Ser197, Asp313, Asn336, and Lys340. Position 171 (Gln171) interacts with phosphoenolpyruvate. The active-site Proton acceptor is Asp313. Arg344, Arg386, and Lys411 together coordinate phosphoenolpyruvate.

The protein belongs to the EPSP synthase family. As to quaternary structure, monomer.

It localises to the cytoplasm. The enzyme catalyses 3-phosphoshikimate + phosphoenolpyruvate = 5-O-(1-carboxyvinyl)-3-phosphoshikimate + phosphate. It functions in the pathway metabolic intermediate biosynthesis; chorismate biosynthesis; chorismate from D-erythrose 4-phosphate and phosphoenolpyruvate: step 6/7. Its function is as follows. Catalyzes the transfer of the enolpyruvyl moiety of phosphoenolpyruvate (PEP) to the 5-hydroxyl of shikimate-3-phosphate (S3P) to produce enolpyruvyl shikimate-3-phosphate and inorganic phosphate. This is 3-phosphoshikimate 1-carboxyvinyltransferase from Xenorhabdus nematophila (strain ATCC 19061 / DSM 3370 / CCUG 14189 / LMG 1036 / NCIMB 9965 / AN6).